Here is a 326-residue protein sequence, read N- to C-terminus: MMTPMWISLFKVLLLLFAFFATYEAKEYERIIKELFTITNDEGVVLFNTSADSAPFMPIPTQHDDPTQKQKQNQNQSPIPETNRHYHQYHSLIQPDQYFKVQRSPNGKLNLVFNDTFVSLQRTDTEVQSEQPIPPRHPSDTFVFPDSPIAKYRPPQSPARPLRNDTKEHNPCAKDESQHLRNFCTNVDDYPDLSGLTHKLKNNFAKFFSNDLQPTDVSSRVGGSDERFLCRSIRKLVYPKKGLRADDTWQLIVNNDEYKQAIQIEECEGADQPCDFAANFPQSYNPICKQHYTQQTLASIKSDGELDVVQNSFKIPSCCKCALKTG.

Residues 1–25 (MMTPMWISLFKVLLLLFAFFATYEA) form the signal peptide. A glycan (N-linked (GlcNAc...) asparagine) is linked at Asn48. Positions 56-82 (FMPIPTQHDDPTQKQKQNQNQSPIPET) are disordered. Residues 69-80 (KQKQNQNQSPIP) are compositionally biased toward polar residues. Residues Asn114 and Asn164 are each glycosylated (N-linked (GlcNAc...) asparagine). Positions 152–174 (YRPPQSPARPLRNDTKEHNPCAK) are disordered. The span at 162-174 (LRNDTKEHNPCAK) shows a compositional bias: basic and acidic residues. Positions 228-322 (FLCRSIRKLV…FKIPSCCKCA (95 aa)) constitute a Spaetzle domain. 3 disulfides stabilise this stretch: Cys230–Cys288, Cys267–Cys319, and Cys274–Cys321.

As to quaternary structure, homodimer; disulfide-linked. In the presence of Tl, crystal structures show one Tl molecule bound to a spaetzle C-106 homodimer. However, the active complex probably consists of two Tl molecules bound to a spaetzle C-106 homodimer. This is supported by in vitro experiments which also show binding of the spaetzle C-106 dimer to 2 Tl receptors. Ligand binding induces conformational changes in the extracellular domain of Tl. This may enable a secondary homodimerization interface at the C-terminus of the Tl extracellular domain. Post-translationally, during embryonic development proteolytically processed by activated ea/easter; ea cleaves the signal peptide and also generates the C-terminal 12 kDa active ligand for the Toll receptor, C-106 (except for isoform 8.24 and isoform 11.27 as they do not contain the cleavage site). During the immune response, cleaved in the same manner by SPE. In terms of processing, extracellular forms of isoform 8.19 and isoform 11.7 are glycosylated.

It localises to the secreted. In terms of biological role, the activated form, spaetzle C-106, acts as a ligand for the Toll receptor. Binding to Toll activates the Toll signaling pathway and induces expression of the antifungal peptide drosomycin. Component of the extracellular signaling pathway that establishes dorsal-ventral polarity in the embryo. This Drosophila melanogaster (Fruit fly) protein is Protein spaetzle.